We begin with the raw amino-acid sequence, 139 residues long: Endoribonuclease YbeY (139 aa).

The Zn(2+) site is built by histidine 99, histidine 103, and histidine 109.

This sequence belongs to the endoribonuclease YbeY family. It depends on Zn(2+) as a cofactor.

The protein resides in the cytoplasm. In terms of biological role, single strand-specific metallo-endoribonuclease involved in late-stage 70S ribosome quality control and in maturation of the 3' terminus of the 16S rRNA. This chain is Endoribonuclease YbeY, found in Sulfurimonas denitrificans (strain ATCC 33889 / DSM 1251) (Thiomicrospira denitrificans (strain ATCC 33889 / DSM 1251)).